A 274-amino-acid chain; its full sequence is Energy-coupling factor transporter ATP-binding protein EcfA (274 aa).

Residues 2–235 (IRLENVSYNY…LSLRYLGLTP (234 aa)) form the ABC transporter domain. Residue 35-42 (GKNGSGKS) coordinates ATP.

This sequence belongs to the ABC transporter superfamily. Energy-coupling factor EcfA family. Forms a stable energy-coupling factor (ECF) transporter complex composed of 2 membrane-embedded substrate-binding proteins (S component), 2 ATP-binding proteins (A component) and 2 transmembrane proteins (T component).

It localises to the cell membrane. Functionally, ATP-binding (A) component of a common energy-coupling factor (ECF) ABC-transporter complex. Unlike classic ABC transporters this ECF transporter provides the energy necessary to transport a number of different substrates. This chain is Energy-coupling factor transporter ATP-binding protein EcfA, found in Methanosarcina acetivorans (strain ATCC 35395 / DSM 2834 / JCM 12185 / C2A).